The sequence spans 1422 residues: FH1/FH2 domain-containing protein 3 (1422 aa).

A GBD/FH3 domain is found at 18-411 (NSTNFPEPSR…NFGNNSYHSS (394 aa)). Disordered regions lie at residues 323–464 (RHED…RRRQ), 521–666 (ACLA…GVNG), 687–708 (RKSP…QEAE), 754–781 (SGDL…VQPK), 821–849 (LGHR…PPLL), 1262–1305 (QQKQ…SYAE), 1320–1357 (SSPS…SPNV), and 1374–1410 (TQVP…EEAR). At Ser-345 the chain carries Phosphoserine. A compositionally biased stretch (basic residues) spans 357–366 (LDRRRSRRHS). Residues 367–390 (VQSIKSTLSAPTSPCSQSAPSFKP) show a composition bias toward polar residues. The residue at position 375 (Ser-375) is a Phosphoserine. Residues 410–430 (SSRPSSGSSVPTTPTSSVSPP) are compositionally biased toward low complexity. The segment covering 438 to 449 (SSPSGLLTSSFR) has biased composition (polar residues). Residues 448–480 (FRQHQESLAAERERRRQEREERLQRIEREERNK) are a coiled coil. A compositionally biased stretch (basic and acidic residues) spans 450-464 (QHQESLAAERERRRQ). Over residues 521-535 (ACLAPLSHSPSSSDS) the composition is skewed to low complexity. Over residues 536–547 (QEALTVSASSPG) the composition is skewed to polar residues. 2 stretches are compositionally biased toward acidic residues: residues 559 to 569 (PEPESEAEPEA) and 592 to 603 (ETEVEQALEQEP). The span at 604-624 (EERASLSEKERQNEGVNERDN) shows a compositional bias: basic and acidic residues. Positions 626–635 (SASSVSSSSS) are enriched in low complexity. Residues 637–651 (LEREEKEDKLSRDRT) show a composition bias toward basic and acidic residues. Ser-763 bears the Phosphoserine mark. A Phosphothreonine modification is found at Thr-775. Pro residues predominate over residues 827–849 (PGPPPPPPPTFLGLPPPPPPPLL). Positions 827-858 (PGPPPPPPPTFLGLPPPPPPPLLDSIPPPPVP) constitute an FH1 domain. One can recognise an FH2 domain in the interval 883-1279 (GQPTFTKKKK…HRERNKTRGK (397 aa)). The segment covering 1264-1278 (KQKRANHRERNKTRG) has biased composition (basic residues). In terms of domain architecture, DAD spans 1359-1391 (DDAADEIMDRIVKSATQVPSQRVVPRERKRSRA). A compositionally biased stretch (basic residues) spans 1385 to 1400 (ERKRSRANRKSLRRTL).

This sequence belongs to the formin homology family. As to quaternary structure, interacts with nestin/NES-based interfilament (IF). Interacts with SQSTM1; isoform 4 threonine phosphorylation disrupts SQSTM1-binding. In terms of processing, phosphorylated on Thr-1474 and Thr-1476 by CK2. Expressed in the heart, kidney and brain. May be down-regulated in various types of heart diseases, including idiopathic dilated, ventricular dilated, familial dilated and perinatal dilated cardiomyopathies, as well as ischemic heart disease (at protein level).

It localises to the cytoplasm. Its subcellular location is the cytoskeleton. The protein localises to the myofibril. The protein resides in the sarcomere. It is found in the z line. Its function is as follows. Actin-organizing protein that may cause stress fiber formation together with cell elongation. Isoform 4 may play a role in actin filament polymerization in cardiomyocytes. The polypeptide is FH1/FH2 domain-containing protein 3 (FHOD3) (Homo sapiens (Human)).